A 233-amino-acid polypeptide reads, in one-letter code: Phosphoribosylaminoimidazole-succinocarboxamide synthase (233 aa).

The protein belongs to the SAICAR synthetase family.

The catalysed reaction is 5-amino-1-(5-phospho-D-ribosyl)imidazole-4-carboxylate + L-aspartate + ATP = (2S)-2-[5-amino-1-(5-phospho-beta-D-ribosyl)imidazole-4-carboxamido]succinate + ADP + phosphate + 2 H(+). It participates in purine metabolism; IMP biosynthesis via de novo pathway; 5-amino-1-(5-phospho-D-ribosyl)imidazole-4-carboxamide from 5-amino-1-(5-phospho-D-ribosyl)imidazole-4-carboxylate: step 1/2. The chain is Phosphoribosylaminoimidazole-succinocarboxamide synthase from Thermococcus sibiricus (strain DSM 12597 / MM 739).